A 273-amino-acid polypeptide reads, in one-letter code: Large ribosomal subunit protein uL2 (273 aa).

A disordered region spans residues 228–273 (VDHPHGGGEGKTSGGRHPVTPWGFPTKGKKTRKNKRTSKFIVKKRK). Residues 254–273 (KGKKTRKNKRTSKFIVKKRK) are compositionally biased toward basic residues.

This sequence belongs to the universal ribosomal protein uL2 family. In terms of assembly, part of the 50S ribosomal subunit. Forms a bridge to the 30S subunit in the 70S ribosome.

Functionally, one of the primary rRNA binding proteins. Required for association of the 30S and 50S subunits to form the 70S ribosome, for tRNA binding and peptide bond formation. It has been suggested to have peptidyltransferase activity; this is somewhat controversial. Makes several contacts with the 16S rRNA in the 70S ribosome. The polypeptide is Large ribosomal subunit protein uL2 (Rickettsia canadensis (strain McKiel)).